Reading from the N-terminus, the 353-residue chain is CCN family member 3 (353 aa).

Positions methionine 1–valine 26 are cleaved as a signal peptide. Residues arginine 29 to leucine 103 form the IGFBP N-terminal domain. 6 cysteine pairs are disulfide-bonded: cysteine 33–cysteine 59, cysteine 37–cysteine 61, cysteine 41–cysteine 62, cysteine 48–cysteine 65, cysteine 73–cysteine 87, and cysteine 79–cysteine 100. In terms of domain architecture, VWFC spans aspartate 106 to glutamate 172. The region spanning asparagine 203–glutamate 248 is the TSP type-1 domain. Cystine bridges form between cysteine 260–cysteine 297, cysteine 277–cysteine 311, cysteine 288–cysteine 327, cysteine 291–cysteine 329, and cysteine 296–cysteine 333. The CTCK domain maps to cysteine 260–proline 334. An N-linked (GlcNAc...) asparagine glycan is attached at asparagine 276.

The protein belongs to the CCN family.

It is found in the secreted. The protein resides in the cytoplasm. Its subcellular location is the cell junction. It localises to the gap junction. Functionally, immediate-early protein likely to play a role in cell growth regulation. This is CCN family member 3 (CCN3) from Coturnix japonica (Japanese quail).